The primary structure comprises 297 residues: 4-hydroxy-tetrahydrodipicolinate synthase (297 aa).

Thr-47 contacts pyruvate. Residue Tyr-135 is the Proton donor/acceptor of the active site. Lys-163 serves as the catalytic Schiff-base intermediate with substrate. Position 205 (Ile-205) interacts with pyruvate.

The protein belongs to the DapA family. As to quaternary structure, homotetramer; dimer of dimers.

It localises to the cytoplasm. It carries out the reaction L-aspartate 4-semialdehyde + pyruvate = (2S,4S)-4-hydroxy-2,3,4,5-tetrahydrodipicolinate + H2O + H(+). It participates in amino-acid biosynthesis; L-lysine biosynthesis via DAP pathway; (S)-tetrahydrodipicolinate from L-aspartate: step 3/4. In terms of biological role, catalyzes the condensation of (S)-aspartate-beta-semialdehyde [(S)-ASA] and pyruvate to 4-hydroxy-tetrahydrodipicolinate (HTPA). This is 4-hydroxy-tetrahydrodipicolinate synthase from Dehalococcoides mccartyi (strain CBDB1).